A 262-amino-acid polypeptide reads, in one-letter code: Ornithine carbamoyltransferase (262 aa).

Residues 3 to 7 (STRTR), glutamine 30, arginine 54, and 81 to 84 (HPTQ) contribute to the carbamoyl phosphate site. L-ornithine is bound by residues asparagine 114, aspartate 178, and 182 to 183 (SM). Carbamoyl phosphate contacts are provided by residues 219-222 (HCLP) and threonine 247.

This sequence belongs to the aspartate/ornithine carbamoyltransferase superfamily. OTCase family.

It is found in the cytoplasm. It catalyses the reaction carbamoyl phosphate + L-ornithine = L-citrulline + phosphate + H(+). It participates in amino-acid biosynthesis; L-arginine biosynthesis; L-arginine from L-ornithine and carbamoyl phosphate: step 1/3. Functionally, reversibly catalyzes the transfer of the carbamoyl group from carbamoyl phosphate (CP) to the N(epsilon) atom of ornithine (ORN) to produce L-citrulline. In Neisseria lactamica, this protein is Ornithine carbamoyltransferase (argF).